The chain runs to 234 residues: Ribosome maturation protein SDO1 homolog (234 aa).

The protein belongs to the SDO1/SBDS family.

This Archaeoglobus fulgidus (strain ATCC 49558 / DSM 4304 / JCM 9628 / NBRC 100126 / VC-16) protein is Ribosome maturation protein SDO1 homolog.